Here is a 45-residue protein sequence, read N- to C-terminus: Temporin-SHf (45 aa).

A signal peptide spans 1–10 (FLGTINLSLC). Residues 11 to 35 (EEERDADEEERRDEPDESNVEVKKR) constitute a propeptide that is removed on maturation. A Phenylalanine amide modification is found at Phe-43.

Belongs to the frog skin active peptide (FSAP) family. Temporin subfamily.

It is found in the secreted. The protein localises to the target cell membrane. Functionally, non-amphipathic alpha-helical antimicrobial peptide with potent activity against some Gram-positive bacteria (including methicillin-resistant Staphylococcus aureus (MRSA)), weak activity against Gram-negative bacteria and no activity against fungi. Permeabilizates membranes through a detergent-like effect probably via the carpet mechanism. More precisely, it strongly and selectively perturbs anionic bilayers membranes by interacting with the polar headgroups and the glycerol backbone region of the phospholipids, hence disrupting the acyl chain packing of the bilayer. Is not active against Leishmania (promastigote and axenic amastigote forms). Does not show hemolytic activity. Does not show toxicity for human THP-1-derived macrophages. This Pelophylax saharicus (Sahara frog) protein is Temporin-SHf.